The sequence spans 84 residues: ATP synthase subunit c (84 aa).

2 helical membrane passes run 1-21 (MLAWVIIVSIITAGLSVALVG) and 53-73 (LLFALAFIETIMIFTLTVALI).

It belongs to the ATPase C chain family. F-type ATPases have 2 components, F(1) - the catalytic core - and F(0) - the membrane proton channel. F(1) has five subunits: alpha(3), beta(3), gamma(1), delta(1), epsilon(1). F(0) has three main subunits: a(1), b(2) and c(10-14). The alpha and beta chains form an alternating ring which encloses part of the gamma chain. F(1) is attached to F(0) by a central stalk formed by the gamma and epsilon chains, while a peripheral stalk is formed by the delta and b chains.

The protein resides in the cell inner membrane. Functionally, f(1)F(0) ATP synthase produces ATP from ADP in the presence of a proton or sodium gradient. F-type ATPases consist of two structural domains, F(1) containing the extramembraneous catalytic core and F(0) containing the membrane proton channel, linked together by a central stalk and a peripheral stalk. During catalysis, ATP synthesis in the catalytic domain of F(1) is coupled via a rotary mechanism of the central stalk subunits to proton translocation. Its function is as follows. Key component of the F(0) channel; it plays a direct role in translocation across the membrane. A homomeric c-ring of between 10-14 subunits forms the central stalk rotor element with the F(1) delta and epsilon subunits. In Dictyoglomus thermophilum (strain ATCC 35947 / DSM 3960 / H-6-12), this protein is ATP synthase subunit c.